The chain runs to 232 residues: Fibrillarin-like rRNA/tRNA 2'-O-methyltransferase (232 aa).

Residues 89–90, 108–109, 133–134, and 153–156 each bind S-adenosyl-L-methionine; these read TT, EF, DA, and DIAQ.

It belongs to the methyltransferase superfamily. Fibrillarin family. In terms of assembly, interacts with nop5. Component of box C/D small ribonucleoprotein (sRNP) particles that contain rpl7ae, FlpA and nop5, plus a guide RNA. These sRNP particles form homodimers, giving rise to an asymmetric holoenzyme.

Involved in pre-rRNA and tRNA processing. Utilizes the methyl donor S-adenosyl-L-methionine to catalyze the site-specific 2'-hydroxyl methylation of ribose moieties in rRNA and tRNA. Site specificity is provided by a guide RNA that base pairs with the substrate. Methylation occurs at a characteristic distance from the sequence involved in base pairing with the guide RNA. The sequence is that of Fibrillarin-like rRNA/tRNA 2'-O-methyltransferase from Saccharolobus solfataricus (strain ATCC 35092 / DSM 1617 / JCM 11322 / P2) (Sulfolobus solfataricus).